Here is a 496-residue protein sequence, read N- to C-terminus: Probable serine/threonine-protein kinase DDB_G0284251 (496 aa).

Over residues 1–13 the composition is skewed to low complexity; that stretch reads MIEINNNHNNGNG. The interval 1–25 is disordered; that stretch reads MIEINNNHNNGNGKQFPSSQIMPDS. The Protein kinase domain occupies 36–288; the sequence is YTLGEKIGRG…AQELLQHPIF (253 aa). ATP is bound by residues 42–50 and Lys-65; that span reads IGRGAFGQV. Residue Asp-158 is the Proton acceptor of the active site. The disordered stretch occupies residues 323–345; the sequence is DWGSSSSTSGSSTPLSSSSSSSN. The stretch at 353–386 forms a coiled coil; the sequence is EDFNKLQTTIKQQAQTISNLSEEILILKKELKEK. The segment at 454 to 496 is disordered; the sequence is PQLTPSSSRENISLSNSSSSIPNPNQNQNQNNKSKSKKFGFFS. The span at 458 to 486 shows a compositional bias: low complexity; it reads PSSSRENISLSNSSSSIPNPNQNQNQNNK. The span at 487-496 shows a compositional bias: basic residues; it reads SKSKKFGFFS.

The protein belongs to the protein kinase superfamily. STE Ser/Thr protein kinase family. Requires Mg(2+) as cofactor.

It carries out the reaction L-seryl-[protein] + ATP = O-phospho-L-seryl-[protein] + ADP + H(+). The enzyme catalyses L-threonyl-[protein] + ATP = O-phospho-L-threonyl-[protein] + ADP + H(+). In Dictyostelium discoideum (Social amoeba), this protein is Probable serine/threonine-protein kinase DDB_G0284251.